Reading from the N-terminus, the 31-residue chain is Photosystem II reaction center protein T (31 aa).

Residues 3 to 23 (ALVYTFLLVGTLGIIFFAIFF) traverse the membrane as a helical segment.

This sequence belongs to the PsbT family. PSII is composed of 1 copy each of membrane proteins PsbA, PsbB, PsbC, PsbD, PsbE, PsbF, PsbH, PsbI, PsbJ, PsbK, PsbL, PsbM, PsbT, PsbY, PsbZ, Psb30/Ycf12, at least 3 peripheral proteins of the oxygen-evolving complex and a large number of cofactors. It forms dimeric complexes.

It localises to the plastid. Its subcellular location is the chloroplast thylakoid membrane. Functionally, found at the monomer-monomer interface of the photosystem II (PS II) dimer, plays a role in assembly and dimerization of PSII. PSII is a light-driven water plastoquinone oxidoreductase, using light energy to abstract electrons from H(2)O, generating a proton gradient subsequently used for ATP formation. This Mesostigma viride (Green alga) protein is Photosystem II reaction center protein T.